The primary structure comprises 155 residues: FAD synthase (155 aa).

Residues 9-10, 14-17, and D92 each bind ATP; these read TF and HPGH.

The protein belongs to the archaeal FAD synthase family. In terms of assembly, homodimer. A divalent metal cation is required as a cofactor.

It catalyses the reaction FMN + ATP + H(+) = FAD + diphosphate. It participates in cofactor biosynthesis; FAD biosynthesis; FAD from FMN: step 1/1. Functionally, catalyzes the transfer of the AMP portion of ATP to flavin mononucleotide (FMN) to produce flavin adenine dinucleotide (FAD) coenzyme. This chain is FAD synthase, found in Archaeoglobus profundus (strain DSM 5631 / JCM 9629 / NBRC 100127 / Av18).